Here is a 189-residue protein sequence, read N- to C-terminus: MAGMSLLRRVSVTAVAALSGRSLGTRLGFGGFLTRGFPKAVAPVRHSGGHGKRLFVIKPSRFYDIRFLKLLRFYIALTGIPVVIIITLVNVFIGEAELAEIPEGYIPEHWEYYKHPISRWIARNFYDSPEKIYEKSMAVLQIEAEKAELRLKELEVRRLMRMRGDGPWYYYETIDKELIDHSPKATPDN.

Residues 1 to 46 constitute a mitochondrion transit peptide; the sequence is MAGMSLLRRVSVTAVAALSGRSLGTRLGFGGFLTRGFPKAVAPVRH. Residues 73-93 form a helical membrane-spanning segment; sequence FYIALTGIPVVIIITLVNVFI.

It belongs to the complex I NDUFB5 subunit family. Complex I is composed of 45 different subunits.

The protein resides in the mitochondrion inner membrane. In terms of biological role, accessory subunit of the mitochondrial membrane respiratory chain NADH dehydrogenase (Complex I), that is believed not to be involved in catalysis. Complex I functions in the transfer of electrons from NADH to the respiratory chain. The immediate electron acceptor for the enzyme is believed to be ubiquinone. This is NADH dehydrogenase [ubiquinone] 1 beta subcomplex subunit 5, mitochondrial (NDUFB5) from Macaca fascicularis (Crab-eating macaque).